We begin with the raw amino-acid sequence, 436 residues long: Ribosomal protein uS12 methylthiotransferase RimO (436 aa).

In terms of domain architecture, MTTase N-terminal spans 2–114 (PNLYLVSLGC…IDEMILKKQN (113 aa)). Residues Cys-11, Cys-45, Cys-77, Cys-146, Cys-150, and Cys-153 each coordinate [4Fe-4S] cluster. The 232-residue stretch at 132–363 (TGSSYHAYIK…IKKQIEGSFK (232 aa)) folds into the Radical SAM core domain. Residues 363 to 434 (KSLVGEVIKV…KDKLIGEIIC (72 aa)) enclose the TRAM domain.

It belongs to the methylthiotransferase family. RimO subfamily. [4Fe-4S] cluster serves as cofactor.

The protein localises to the cytoplasm. It catalyses the reaction L-aspartate(89)-[ribosomal protein uS12]-hydrogen + (sulfur carrier)-SH + AH2 + 2 S-adenosyl-L-methionine = 3-methylsulfanyl-L-aspartate(89)-[ribosomal protein uS12]-hydrogen + (sulfur carrier)-H + 5'-deoxyadenosine + L-methionine + A + S-adenosyl-L-homocysteine + 2 H(+). Functionally, catalyzes the methylthiolation of an aspartic acid residue of ribosomal protein uS12. The chain is Ribosomal protein uS12 methylthiotransferase RimO from Campylobacter fetus subsp. fetus (strain 82-40).